We begin with the raw amino-acid sequence, 121 residues long: Large ribosomal subunit protein uL18 (121 aa).

Belongs to the universal ribosomal protein uL18 family. Part of the 50S ribosomal subunit; part of the 5S rRNA/L5/L18/L25 subcomplex. Contacts the 5S and 23S rRNAs.

In terms of biological role, this is one of the proteins that bind and probably mediate the attachment of the 5S RNA into the large ribosomal subunit, where it forms part of the central protuberance. The sequence is that of Large ribosomal subunit protein uL18 from Delftia acidovorans (strain DSM 14801 / SPH-1).